Consider the following 362-residue polypeptide: Talin rod domain-containing protein 1 (362 aa).

The interval 1–26 (MASGSAGKPTGEAASPAPASAIGGAS) is disordered. A2 bears the N-acetylalanine mark. The span at 13-26 (AASPAPASAIGGAS) shows a compositional bias: low complexity.

May homodimerize. Interacts with F-actin.

Its function is as follows. Actin-binding protein which may have an oncogenic function and regulates cell proliferation, migration and invasion in cancer cells. The sequence is that of Talin rod domain-containing protein 1 from Homo sapiens (Human).